We begin with the raw amino-acid sequence, 118 residues long: MNKEQILEAIKAMTVLELNDLVKAIEEEFGVTAAAPVVAGGAAAAAEEKTEFDVVLASAGAEKIKVIKVVREITGLGLKEAKEVVDNAPKALKEGVSKDEAEEIKAKLEEVGASVEVK.

Residue methionine 1 is modified to N-acetylmethionine; in form MA2.

Belongs to the bacterial ribosomal protein bL12 family. Homodimer. Part of the ribosomal stalk of the 50S ribosomal subunit. Forms a multimeric L10(L12)X complex, where L10 forms an elongated spine to which 2 to 4 L12 dimers bind in a sequential fashion. Binds GTP-bound translation factors. Acetylation of Met-1 converts MA1 to MA2.

Its function is as follows. Forms part of the ribosomal stalk which helps the ribosome interact with GTP-bound translation factors. Is thus essential for accurate translation. In Micrococcus luteus (Micrococcus lysodeikticus), this protein is Large ribosomal subunit protein bL12.